Consider the following 246-residue polypeptide: E3 ubiquitin-protein ligase MARCHF2 (246 aa).

The RING-CH-type zinc-finger motif lies at 56-116 (DSQSDCPFCR…ELCHTEFAVE (61 aa)). Zn(2+)-binding residues include cysteine 64, cysteine 67, cysteine 80, cysteine 82, histidine 90, cysteine 93, cysteine 106, and cysteine 109. The segment at 121 to 246 (PLTEWLKDPG…LKKVAEETPV (126 aa)) is required for interaction with IKBKG. A run of 2 helical transmembrane segments spans residues 138 to 158 (LCCD…SGWL) and 175 to 195 (AVGL…WTLV).

In terms of assembly, interacts with STX6; the interaction promotes MARCHF2-mediated ubiquitination and degradation of CFTR. Interacts with MARCHF3. Interacts with GOPC/CAL; the interaction leads to CFTR ubiquitination and degradation. Interacts with CFTR; the interaction leads to CFTR ubiqtuitination and degradation. Interacts (via PDZ domain) with DLG1 (via PDZ domains); the interaction leads to DLG1 ubiqtuitination and degradation. Interacts with ERGIC3. Interacts with ADRB2. Interacts with IKBKG/NEMO; during the late stages of macrophage viral and bacterial infection; the interaction leads to ubiquitination and degradation of IKBKG/NEMO.

It localises to the endoplasmic reticulum membrane. The protein localises to the lysosome membrane. Its subcellular location is the endosome membrane. It is found in the golgi apparatus membrane. The protein resides in the cytoplasm. It localises to the cell membrane. It carries out the reaction S-ubiquitinyl-[E2 ubiquitin-conjugating enzyme]-L-cysteine + [acceptor protein]-L-lysine = [E2 ubiquitin-conjugating enzyme]-L-cysteine + N(6)-ubiquitinyl-[acceptor protein]-L-lysine.. It functions in the pathway protein modification; protein ubiquitination. E3 ubiquitin-protein ligase that may mediate ubiquitination of TFRC and CD86, and promote their subsequent endocytosis and sorting to lysosomes via multivesicular bodies. E3 ubiquitin ligases accept ubiquitin from an E2 ubiquitin-conjugating enzyme in the form of a thioester and then directly transfer the ubiquitin to targeted substrates. Together with GOPC/CAL mediates the ubiquitination and lysosomal degradation of CFTR. Ubiquitinates and therefore mediates the degradation of DLG1. Regulates the intracellular trafficking and secretion of alpha1-antitrypsin/SERPINA1 and HP/haptoglobin via ubiquitination and degradation of the cargo receptor ERGIC3. Negatively regulates the antiviral and antibacterial immune response by repression of the NF-kB and type 1 IFN signaling pathways, via MARCHF2-mediated K48-linked polyubiquitination of IKBKG/NEMO, resulting in its proteasomal degradation. May be involved in endosomal trafficking through interaction with STX6. This is E3 ubiquitin-protein ligase MARCHF2 (Marchf2) from Mus musculus (Mouse).